Reading from the N-terminus, the 473-residue chain is Photosystem II CP43 reaction center protein (473 aa).

The propeptide occupies 1-14 (MKTLYSLRRFYHVE). At Thr-15 the chain carries N-acetylthreonine. Thr-15 bears the Phosphothreonine mark. Transmembrane regions (helical) follow at residues 69 to 93 (LFEV…PHLA), 134 to 155 (LIGP…KDKN), 178 to 200 (KAVW…RKIT), 255 to 275 (KPFA…LSYS), and 291 to 312 (WFNN…ASQA). A [CaMn4O5] cluster-binding site is contributed by Glu-367. Residues 447–471 (RARAAAAGFEKGIDRETEPVFFMNP) traverse the membrane as a helical segment.

It belongs to the PsbB/PsbC family. PsbC subfamily. PSII is composed of 1 copy each of membrane proteins PsbA, PsbB, PsbC, PsbD, PsbE, PsbF, PsbH, PsbI, PsbJ, PsbK, PsbL, PsbM, PsbT, PsbX, PsbY, PsbZ, Psb30/Ycf12, at least 3 peripheral proteins of the oxygen-evolving complex and a large number of cofactors. It forms dimeric complexes. The cofactor is Binds multiple chlorophylls and provides some of the ligands for the Ca-4Mn-5O cluster of the oxygen-evolving complex. It may also provide a ligand for a Cl- that is required for oxygen evolution. PSII binds additional chlorophylls, carotenoids and specific lipids..

The protein resides in the plastid. It localises to the chloroplast thylakoid membrane. Functionally, one of the components of the core complex of photosystem II (PSII). It binds chlorophyll and helps catalyze the primary light-induced photochemical processes of PSII. PSII is a light-driven water:plastoquinone oxidoreductase, using light energy to abstract electrons from H(2)O, generating O(2) and a proton gradient subsequently used for ATP formation. This is Photosystem II CP43 reaction center protein from Staurastrum punctulatum (Green alga).